Reading from the N-terminus, the 102-residue chain is MKDLRTLAAYALALLLLATFVSYSRSAPMGSFQRRNWTPQAMLYLKGTQGRRFVSEDRNEGDLYDTIRLESQSQNTENLSISKAAAFLLNVLQQARDEGEPY.

An N-terminal signal peptide occupies residues 1-26; that stretch reads MKDLRTLAAYALALLLLATFVSYSRS. A propeptide spanning residues 27-35 is cleaved from the precursor; sequence APMGSFQRR. Gln-49 is modified (glutamine amide). The propeptide occupies 50–102; it reads GRRFVSEDRNEGDLYDTIRLESQSQNTENLSISKAAAFLLNVLQQARDEGEPY.

This sequence belongs to the spexin family. In terms of tissue distribution, expressed in the anterior hypothalamus, ventromedial thalamic nucleus and medial longitudinal fasciculus of the brain (at protein level). Widely expressed. Expressed predominantly in the spleen, kidney, liver and testis. Expressed in olfactory bulb, pituitary, telencephalon, diencephalons, spinal cord, optic tectum, cerebellum and hypothalamus of the brain.

The protein localises to the secreted. It localises to the extracellular space. Its subcellular location is the cytoplasmic vesicle. The protein resides in the secretory vesicle. Its function is as follows. Plays a role in the regulation of food intake and body weight and in reproduction. May also play a role as a central modulator of cardiovascular and renal function and nociception. In terms of biological role, brain administration of the peptide inhibits food consumption. May function as a satiety factor for feeding control. Involved in the negative regulation of the reproductive axis by inhibiting luteinizing hormone secretion from pituitary cells. The polypeptide is Spexin prohormone 1 (spx) (Carassius auratus (Goldfish)).